Consider the following 337-residue polypeptide: Holliday junction branch migration complex subunit RuvB (337 aa).

Residues 4 to 186 are large ATPase domain (RuvB-L); the sequence is ADRLIAADNP…FGIVQRLEYY (183 aa). ATP contacts are provided by residues I25, R26, G67, K70, T71, T72, 133-135, R176, Y186, and R223; that span reads EDY. Mg(2+) is bound at residue T71. The small ATPAse domain (RuvB-S) stretch occupies residues 187 to 257; that stretch reads KVEDLQHIVQ…IADKALNMLD (71 aa). The head domain (RuvB-H) stretch occupies residues 260-337; it reads VRGFDYMDRK…LHFGIDKPDK (78 aa). 3 residues coordinate DNA: R296, R315, and R320.

It belongs to the RuvB family. In terms of assembly, homohexamer. Forms an RuvA(8)-RuvB(12)-Holliday junction (HJ) complex. HJ DNA is sandwiched between 2 RuvA tetramers; dsDNA enters through RuvA and exits via RuvB. An RuvB hexamer assembles on each DNA strand where it exits the tetramer. Each RuvB hexamer is contacted by two RuvA subunits (via domain III) on 2 adjacent RuvB subunits; this complex drives branch migration. In the full resolvosome a probable DNA-RuvA(4)-RuvB(12)-RuvC(2) complex forms which resolves the HJ.

The protein localises to the cytoplasm. It catalyses the reaction ATP + H2O = ADP + phosphate + H(+). Functionally, the RuvA-RuvB-RuvC complex processes Holliday junction (HJ) DNA during genetic recombination and DNA repair, while the RuvA-RuvB complex plays an important role in the rescue of blocked DNA replication forks via replication fork reversal (RFR). RuvA specifically binds to HJ cruciform DNA, conferring on it an open structure. The RuvB hexamer acts as an ATP-dependent pump, pulling dsDNA into and through the RuvAB complex. RuvB forms 2 homohexamers on either side of HJ DNA bound by 1 or 2 RuvA tetramers; 4 subunits per hexamer contact DNA at a time. Coordinated motions by a converter formed by DNA-disengaged RuvB subunits stimulates ATP hydrolysis and nucleotide exchange. Immobilization of the converter enables RuvB to convert the ATP-contained energy into a lever motion, pulling 2 nucleotides of DNA out of the RuvA tetramer per ATP hydrolyzed, thus driving DNA branch migration. The RuvB motors rotate together with the DNA substrate, which together with the progressing nucleotide cycle form the mechanistic basis for DNA recombination by continuous HJ branch migration. Branch migration allows RuvC to scan DNA until it finds its consensus sequence, where it cleaves and resolves cruciform DNA. The polypeptide is Holliday junction branch migration complex subunit RuvB (Aliivibrio fischeri (strain ATCC 700601 / ES114) (Vibrio fischeri)).